The sequence spans 178 residues: NADPH azoreductase (178 aa).

106–111 (GGGKGG) contacts NADP(+).

Belongs to the azoreductase type 2 family. In terms of assembly, monomer.

It catalyses the reaction N,N-dimethyl-1,4-phenylenediamine + aniline + 2 NADP(+) = 4-(dimethylamino)azobenzene + 2 NADPH + 2 H(+). Catalyzes the reductive cleavage of azo bond in aromatic azo compounds to the corresponding amines. Requires NADPH as an electron donor for its activity. Compounds with paired naphthalene groups coupled with the azo group are good substrates, with the following preference order: Rocceline &gt; Sumifix Black B &gt; Solar Orange. This Bacillus sp. (strain OY1-2) protein is NADPH azoreductase (azr).